We begin with the raw amino-acid sequence, 55 residues long: Large ribosomal subunit protein bL33 (55 aa).

This sequence belongs to the bacterial ribosomal protein bL33 family.

The protein is Large ribosomal subunit protein bL33 of Xanthomonas oryzae pv. oryzae (strain PXO99A).